The sequence spans 250 residues: Transcriptional activator protein EchR (250 aa).

Positions 173–238 (KSQEPNIFSQ…HAIRLGVEMN (66 aa)) constitute an HTH luxR-type domain. The H-T-H motif DNA-binding region spans 197 to 216 (YQEIALILGITTSTVKFHIG).

This sequence belongs to the autoinducer-regulated transcriptional regulatory protein family.

In terms of biological role, functions as a potential ohlL-responsive transcriptional regulator. This chain is Transcriptional activator protein EchR (echR), found in Dickeya chrysanthemi (Pectobacterium chrysanthemi).